The sequence spans 551 residues: Interferon-induced, double-stranded RNA-activated protein kinase (551 aa).

Position 2 is an N-acetylalanine (alanine 2). Residues 2 to 180 (AGDLSAGFFM…SVKSDYLSSG (179 aa)) are (Microbial infection) Interaction with HCV NS5A. In terms of domain architecture, DRBM 1 spans 9–77 (FFMEELNTYR…AKLAVEILNK (69 aa)). Lysine 69 is covalently cross-linked (Glycyl lysine isopeptide (Lys-Gly) (interchain with G-Cter in ISG15)). Serine 83 carries the phosphoserine modification. Residues threonine 88, threonine 89, and threonine 90 each carry the phosphothreonine; by autocatalysis modification. The region spanning 100-167 (NYIGLINRIA…AKLAYLQILS (68 aa)) is the DRBM 2 domain. The residue at position 101 (tyrosine 101) is a Phosphotyrosine; by autocatalysis. Lysine 159 participates in a covalent cross-link: Glycyl lysine isopeptide (Lys-Gly) (interchain with G-Cter in ISG15). Tyrosine 162 bears the Phosphotyrosine; by autocatalysis mark. Over residues 202 to 215 (SSSEGDFSADTSEI) the composition is skewed to polar residues. A disordered region spans residues 202-222 (SSSEGDFSADTSEINSNSDSL). Serine 242 is modified (phosphoserine; by autocatalysis). 2 positions are modified to phosphothreonine; by autocatalysis: threonine 255 and threonine 258. Residues 266–362 (DFKEIELIGS…NSSRSKTKCL (97 aa)) are dimerization. Positions 266 to 551 (DFKEIELIGS…SPEKNERHTC (286 aa)) are interaction with TRAF5. The Protein kinase domain maps to 267-538 (FKEIELIGSG…TSEILRTLTV (272 aa)). 273–281 (IGSGGFGQV) contacts ATP. Tyrosine 293 is subject to Phosphotyrosine; by autocatalysis. An ATP-binding site is contributed by lysine 296. 2 tandem repeats follow at residues 331 to 343 (DYDP…SLES) and 345 to 357 (DYDP…SSRS). The 2 X 13 AA approximate repeats stretch occupies residues 331–357 (DYDPETSDDSLESSDYDPENSKNSSRS). Positions 379–496 (EKRRGEKLDK…TAFETSKFFT (118 aa)) are interaction with EIF2S1/EIF-2ALPHA. Aspartate 414 (proton acceptor) is an active-site residue. Aspartate 432 is a Mg(2+) binding site. 2 positions are modified to phosphothreonine; by autocatalysis: threonine 446 and threonine 451. Phosphoserine is present on residues serine 456 and serine 542.

Belongs to the protein kinase superfamily. Ser/Thr protein kinase family. GCN2 subfamily. Homodimer. Interacts with STRBP. Interacts with DNAJC3. Forms a complex with FANCA, FANCC, FANCG and HSP70. Interacts with ADAR/ADAR1. Interacts with IRS1. The inactive form interacts with NCK1 and GSN. Interacts (via the kinase catalytic domain) with STAT3 (via SH2 domain), TRAF2 (C-terminus), TRAF5 (C-terminus) and TRAF6 (C-terminus). Interacts with MAP2K6, IKBKB/IKKB, NPM1, TARBP2, NLRP1, NLRP3, NLRC4 and AIM2. Interacts (via DRBM 1 domain) with DUS2L (via DRBM domain). Interacts with DHX9 (via N-terminus) and this interaction is dependent upon activation of the kinase. Interacts with EIF2S1/EIF-2ALPHA; this interaction induces a conformational change in EIF2S1 and its phosphorylation by EIF2AK2. As to quaternary structure, (Microbial infection) Interacts with human cytomegalovirus (HCMV) TRS1; this interaction retains EIF2AK2 to the nucleus and prevents its activation. In terms of assembly, (Microbial infection) Interacts with vaccinia virus protein K3 (K3L); this interaction inhibits EIF2AK2. (Microbial infection) Interacts with human herpes simplex virus 1 (HHV-1) protein US11 in an RNA-dependent manner. As to quaternary structure, (Microbial infection) The inactive form interacts with Toscana virus (TOS) NSS. In terms of assembly, (Microbial infection) Interacts with herpes virus 8 protein v-IRF2; this interaction inhibits EIF2AK2 activation. (Microbial infection) Interacts with vaccinia protein E3. As to quaternary structure, (Microbial infection) Interacts (via N-terminus) with Hepatitis C virus (HCV) mature core protein (via N-terminus); this interaction induces the autophosphorylation of EIF2AK2. In terms of assembly, (Microbial infection) Interacts with Hepatitis C virus (HCV) non-structural protein 5A (NS5A); this interaction leads to disruption of EIF2AK2 dimerization by NS5A. (Microbial infection) Interacts with Hepatitis C virus (HCV) envelope glycoprotein E2; this interaction inhibits EIF2AK2 and blocks its inhibitory effect on protein synthesis and cell growth. As to quaternary structure, (Microbial infection) Interacts with human respiratory syncytial virus (HRSV) nucleoprotein; this interaction inhibits EIF2AK2 phosphorylation of EIF2S1 and blocks EIF2AK2-mediated translation shutoff. In terms of assembly, (Microbial infection) Interacts with human herpesvirus 8 protein MTA/ORF57; this interaction inhibits stress granule formation. It depends on Mg(2+) as a cofactor. Autophosphorylated on several Ser, Thr and Tyr residues. Autophosphorylation of Thr-451 is dependent on Thr-446 and is stimulated by dsRNA binding and dimerization. Autophosphorylation apparently leads to the activation of the kinase. Tyrosine autophosphorylation is essential for efficient dsRNA-binding, dimerization, and kinase activation. In terms of tissue distribution, highly expressed in thymus, spleen and bone marrow compared to non-hematopoietic tissues such as small intestine, liver, or kidney tissues. Colocalizes with GSK3B and TAU in the Alzheimer disease (AD) brain. Elevated levels seen in breast and colon carcinomas, and which correlates with tumor progression and invasiveness or risk of progression.

The protein resides in the cytoplasm. Its subcellular location is the nucleus. The protein localises to the perinuclear region. The enzyme catalyses L-seryl-[protein] + ATP = O-phospho-L-seryl-[protein] + ADP + H(+). It carries out the reaction L-threonyl-[protein] + ATP = O-phospho-L-threonyl-[protein] + ADP + H(+). It catalyses the reaction L-tyrosyl-[protein] + ATP = O-phospho-L-tyrosyl-[protein] + ADP + H(+). With respect to regulation, initially produced in an inactive form and is activated by binding to viral dsRNA, which causes dimerization and autophosphorylation in the activation loop and stimulation of function. ISGylation can activate it in the absence of viral infection. Can also be activated by heparin, pro-inflammatory stimuli, growth factors, cytokines, oxidative stress and the cellular protein PRKRA. Activity is markedly stimulated by manganese ions. Activation is blocked by the viral components HIV-1 Tat protein and large amounts of HIV-1 trans-activation response (TAR) RNA element as well as by the cellular proteins TARBP2, DUS2L, NPM1, NCK1 and ADAR. Down-regulated by Toscana virus (TOS) and Rift valley fever virus (RVFV) NSS which promote its proteasomal degradation. Inhibited by vaccinia virus protein E3, probably via dsRNA sequestering. IFN-induced dsRNA-dependent serine/threonine-protein kinase that phosphorylates the alpha subunit of eukaryotic translation initiation factor 2 (EIF2S1/eIF-2-alpha) and plays a key role in the innate immune response to viral infection. Inhibits viral replication via the integrated stress response (ISR): EIF2S1/eIF-2-alpha phosphorylation in response to viral infection converts EIF2S1/eIF-2-alpha in a global protein synthesis inhibitor, resulting to a shutdown of cellular and viral protein synthesis, while concomitantly initiating the preferential translation of ISR-specific mRNAs, such as the transcriptional activator ATF4. Exerts its antiviral activity on a wide range of DNA and RNA viruses including hepatitis C virus (HCV), hepatitis B virus (HBV), measles virus (MV) and herpes simplex virus 1 (HHV-1). Also involved in the regulation of signal transduction, apoptosis, cell proliferation and differentiation: phosphorylates other substrates including p53/TP53, PPP2R5A, DHX9, ILF3, IRS1 and the HHV-1 viral protein US11. In addition to serine/threonine-protein kinase activity, also has tyrosine-protein kinase activity and phosphorylates CDK1 at 'Tyr-4' upon DNA damage, facilitating its ubiquitination and proteasomal degradation. Either as an adapter protein and/or via its kinase activity, can regulate various signaling pathways (p38 MAP kinase, NF-kappa-B and insulin signaling pathways) and transcription factors (JUN, STAT1, STAT3, IRF1, ATF3) involved in the expression of genes encoding pro-inflammatory cytokines and IFNs. Activates the NF-kappa-B pathway via interaction with IKBKB and TRAF family of proteins and activates the p38 MAP kinase pathway via interaction with MAP2K6. Can act as both a positive and negative regulator of the insulin signaling pathway (ISP). Negatively regulates ISP by inducing the inhibitory phosphorylation of insulin receptor substrate 1 (IRS1) at 'Ser-312' and positively regulates ISP via phosphorylation of PPP2R5A which activates FOXO1, which in turn up-regulates the expression of insulin receptor substrate 2 (IRS2). Can regulate NLRP3 inflammasome assembly and the activation of NLRP3, NLRP1, AIM2 and NLRC4 inflammasomes. Plays a role in the regulation of the cytoskeleton by binding to gelsolin (GSN), sequestering the protein in an inactive conformation away from actin. The sequence is that of Interferon-induced, double-stranded RNA-activated protein kinase (EIF2AK2) from Homo sapiens (Human).